A 441-amino-acid chain; its full sequence is MKLKLNFLPYFSFIPKKLNTNSIIFKIIKVFFIAILLSNSIYLSFFENIFTQTISPFLAIWGLVLLLKSKTSKQYFWIGFFVGILWFWWIGLSSIYFNLNYLVPIIPIIIGFIYGLLFRLCYLLKFDFLRLCGIFCISFIHPLGFDWFNWGIFTVYGFFDPSYRGIICIFLIAYFIYEGYISRYYKIAIVLILFFSGFQYNEKQAQTLNLNYKLINTNISQDQKFLQENLKSNSDILIQDILQAINEKKELVILPETAFAFDLKNTKYELMLKELSYKITIITGAFHVEKEHTYNSTYIFKKGNVYILNKHFLVPFGEEIPFFKDLTKKYFLKNIEEFSKGPIQSKYKLDNQIITNAICYEATKEQNYQNSQIIIALSNNAWFNNSSEYKLQQLLMKFYASKYGVSVYHATNGKENIVILPKKLLSKDWKNLSKEIFNDKK.

7 consecutive transmembrane segments (helical) span residues 23 to 43 (IIFK…SIYL), 45 to 65 (FFEN…GLVL), 75 to 95 (YFWI…LSSI), 97 to 117 (FNLN…YGLL), 133 to 153 (GIFC…WGIF), 156 to 176 (YGFF…AYFI), and 178 to 198 (EGYI…FSGF). One can recognise a CN hydrolase domain in the interval 215–441 (INTNISQDQK…LSKEIFNDKK (227 aa)). E256 functions as the Proton acceptor in the catalytic mechanism. K310 is a catalytic residue. C359 functions as the Nucleophile in the catalytic mechanism.

This sequence belongs to the CN hydrolase family. Apolipoprotein N-acyltransferase subfamily.

Its subcellular location is the cell inner membrane. The enzyme catalyses N-terminal S-1,2-diacyl-sn-glyceryl-L-cysteinyl-[lipoprotein] + a glycerophospholipid = N-acyl-S-1,2-diacyl-sn-glyceryl-L-cysteinyl-[lipoprotein] + a 2-acyl-sn-glycero-3-phospholipid + H(+). It functions in the pathway protein modification; lipoprotein biosynthesis (N-acyl transfer). Functionally, catalyzes the phospholipid dependent N-acylation of the N-terminal cysteine of apolipoprotein, the last step in lipoprotein maturation. The protein is Apolipoprotein N-acyltransferase of Campylobacter jejuni subsp. jejuni serotype O:2 (strain ATCC 700819 / NCTC 11168).